The following is a 337-amino-acid chain: Putative carboxypeptidase TP_0688 (337 aa).

The active-site Nucleophile is Ser-118. Active-site charge relay system residues include Glu-234 and His-302.

The protein belongs to the peptidase S66 family.

The protein is Putative carboxypeptidase TP_0688 of Treponema pallidum (strain Nichols).